Consider the following 772-residue polypeptide: Protein transport protein SEC23 F (772 aa).

The Zn(2+) site is built by Cys-65, Cys-68, Cys-87, and Cys-90. The interval 65-90 (CKTCKALLNAFARVDFAAMNWVCPFC) is zinc finger-like.

Belongs to the SEC23/SEC24 family. SEC23 subfamily. As to quaternary structure, component of the coat protein complex II (COPII), composed of at least five proteins: the Sec23/24 complex, the Sec13/31 complex and Sar1. Interacts with SEC24A.

It is found in the cytoplasmic vesicle. Its subcellular location is the COPII-coated vesicle membrane. The protein localises to the endoplasmic reticulum membrane. The protein resides in the membrane. Component of the coat protein complex II (COPII) which promotes the formation of transport vesicles from the endoplasmic reticulum (ER). The coat has two main functions, the physical deformation of the endoplasmic reticulum membrane into vesicles and the selection of cargo molecules. In Arabidopsis thaliana (Mouse-ear cress), this protein is Protein transport protein SEC23 F.